Reading from the N-terminus, the 124-residue chain is Small ribosomal subunit protein uS11 (124 aa).

The protein belongs to the universal ribosomal protein uS11 family. Part of the 30S ribosomal subunit. Interacts with proteins S7 and S18. Binds to IF-3.

Functionally, located on the platform of the 30S subunit, it bridges several disparate RNA helices of the 16S rRNA. Forms part of the Shine-Dalgarno cleft in the 70S ribosome. This is Small ribosomal subunit protein uS11 from Anaplasma marginale (strain St. Maries).